Here is a 353-residue protein sequence, read N- to C-terminus: MAMTLLEDWCRGMDVNSQRALLVWGIPVNCDEAEIEETLQAAMPQVHYRVLGRMFWREENAKAALLELTGTVDYAAIPREMPGKGGVWKVVFKPPTSDAEFLERLHLFLAREGWTVQDVARVLGFENSSPAPGPDMPAEMLNYILDNVIKPLIESIWYKKLTLFSGRDIPGPGEETFEPWLEHANEVIEEWQVSDIEKRRRLMESLRGPAADVIRILKTNNPDITTAECLKALEQVFGSVESSRDVQVRFLNTYQNPGEKLSAYVIRLEPLLQKVVEKGAIDKENVNQARLEQVIAGANHSGAIRRQLWLTGAAEGPAPNLFQLLVQIREEEAKEEEAAAEAALLQLGLEGHF.

It belongs to the PNMA family.

The protein localises to the nucleus. It localises to the nucleolus. The chain is Paraneoplastic antigen Ma1 homolog (PNMA1) from Bos taurus (Bovine).